Consider the following 149-residue polypeptide: Large ribosomal subunit protein bL9 (149 aa).

Belongs to the bacterial ribosomal protein bL9 family.

Binds to the 23S rRNA. This chain is Large ribosomal subunit protein bL9, found in Christiangramia forsetii (strain DSM 17595 / CGMCC 1.15422 / KT0803) (Gramella forsetii).